We begin with the raw amino-acid sequence, 445 residues long: D-serine transporter DsdX (445 aa).

Helical transmembrane passes span 5-25 (IWVV…IVKF), 29-49 (PFLA…MGPL), 57-77 (SGIG…TILG), 106-126 (VLVG…VLLI), 140-160 (LLKL…VVPP), 178-198 (VIVY…PLFL), 224-244 (TLPS…LMLV), 265-285 (IGNP…VLGI), 302-322 (FGSI…NAIL), 343-363 (ILLA…ATVA), 385-405 (IIAI…DSLF), and 425-445 (TATF…SFII).

This sequence belongs to the GntP permease family.

The protein localises to the cell inner membrane. With respect to regulation, uptake of D-serine is inhibited by carbonyl cyanide m-chlorophenylhydrazone (CCCP), and at high concentrations of D-threonine, stimulated by D-cycloserine and not affected by D-alanine or glycine. Protein that allows transport of D-serine across the inner membrane, does not transport D-alanine nor probably glycine. Is probably a H(+) symporter, as CCCP inhibits transport. Transports D-serine more efficiently than CycA. The sequence is that of D-serine transporter DsdX (dsdX) from Escherichia coli O6:H1 (strain CFT073 / ATCC 700928 / UPEC).